Reading from the N-terminus, the 473-residue chain is MSMKPVVALIGRPNVGKSTIFNQMTKTRQALVADLSGLTRDRQYGDATYNNKSFVVIDTGGIGEADDGRGSIDDYMSAQSHTAIHEADILVFVVDARAGMIGADAEIGKMLHTLGKPVYLVANKIDGVHDAAPAEFYALGLGEPYPMTASHGRGIANLLDDLTADMPEDVEEEDQGGLKLAIIGRPNVGKSTLVNRMLGEERVVVYDMPGTTRDSIYIPFERNGKNYVLIDTAGVRRRGRIDEKVEKFSVIKALQAIKDANVVVAVIDAQEGIVDQDLHMLGYALDAGRAMVVAINKWDGLSEDKKEMIRIELDRRFNFIPYVKVHFISALHGTNVGNLYPSIHKAYASSMFKVSTNRLTQILEDAVAANPPPMSGGRRIKLRYAHLGGHNPPIIVIHGNQTGSLPKSYQRYLENEFRKVFNLEGTPLKVEFKLNTNPYAGKKTTSSKKLRPGVSEARQKRRNMKYKKGSHKK.

2 consecutive EngA-type G domains span residues 5–170 (PVVA…PEDV) and 178–351 (LKLA…ASSM). GTP is bound by residues 11–18 (GRPNVGKS), 58–62 (DTGGI), 123–126 (NKID), 184–191 (GRPNVGKS), 231–235 (DTAGV), and 296–299 (NKWD). One can recognise a KH-like domain in the interval 352-436 (FKVSTNRLTQ…PLKVEFKLNT (85 aa)). The disordered stretch occupies residues 438–473 (PYAGKKTTSSKKLRPGVSEARQKRRNMKYKKGSHKK). Positions 459–473 (QKRRNMKYKKGSHKK) are enriched in basic residues.

The protein belongs to the TRAFAC class TrmE-Era-EngA-EngB-Septin-like GTPase superfamily. EngA (Der) GTPase family. As to quaternary structure, associates with the 50S ribosomal subunit.

Functionally, GTPase that plays an essential role in the late steps of ribosome biogenesis. The protein is GTPase Der of Psychrobacter sp. (strain PRwf-1).